Here is a 367-residue protein sequence, read N- to C-terminus: Dual specificity protein phosphatase 1 (367 aa).

In terms of domain architecture, Rhodanese spans 20–137 (RAAQCLLLDC…FSASCPELCS (118 aa)). Residues 173–314 (GPVEILSFLY…LLQFESQVLA (142 aa)) form the Tyrosine-protein phosphatase domain. Cysteine 258 (phosphocysteine intermediate) is an active-site residue. Serine 359 and serine 364 each carry phosphoserine; by MAPK1 and MAPK3.

Belongs to the protein-tyrosine phosphatase family. Non-receptor class dual specificity subfamily. In terms of processing, phosphorylation at Ser-359 and Ser-364 by MAPK1/ERK2 and MAPK3/ERK1 reduces its rate of degradation. Post-translationally, 'Lys-48'-linked polyubiquitinated by NEURL3, leading to proteasomal degradation. Brain. High level expression seen in the cingulate gyrus within the retrospinal cortex, ventral and medial divisions of the anterior thalamus and the medial geniculate nucleus. Expressed at moderate levels in the parietal and temporal cortex. Expressed in the cerebellum.

It localises to the nucleus. It catalyses the reaction O-phospho-L-tyrosyl-[protein] + H2O = L-tyrosyl-[protein] + phosphate. The catalysed reaction is O-phospho-L-seryl-[protein] + H2O = L-seryl-[protein] + phosphate. The enzyme catalyses O-phospho-L-threonyl-[protein] + H2O = L-threonyl-[protein] + phosphate. Its function is as follows. Dual specificity phosphatase that dephosphorylates MAP kinase MAPK1/ERK2 on both 'Thr-183' and 'Tyr-185', regulating its activity during the meiotic cell cycle. The polypeptide is Dual specificity protein phosphatase 1 (Rattus norvegicus (Rat)).